We begin with the raw amino-acid sequence, 161 residues long: MKVGIIMGSKSDWPTMKLAAEMLDRFGVEYETKVVSAHRTPHLLAEYASTAKERGLKVIIAGAGGAAHLPGMAAAFTSLPVLGVPVQSRALSGLDSLYSIVQMPKGIAVGTLAIGEAGAANAGLLAAQILGTHDENIMAKVEAFRSEQTESVLANPNPAED.

Substrate is bound by residues serine 9, aspartate 12, and arginine 39.

This sequence belongs to the AIR carboxylase family. Class I subfamily.

The enzyme catalyses 5-carboxyamino-1-(5-phospho-D-ribosyl)imidazole + H(+) = 5-amino-1-(5-phospho-D-ribosyl)imidazole-4-carboxylate. Its pathway is purine metabolism; IMP biosynthesis via de novo pathway; 5-amino-1-(5-phospho-D-ribosyl)imidazole-4-carboxylate from 5-amino-1-(5-phospho-D-ribosyl)imidazole (N5-CAIR route): step 2/2. In terms of biological role, catalyzes the conversion of N5-carboxyaminoimidazole ribonucleotide (N5-CAIR) to 4-carboxy-5-aminoimidazole ribonucleotide (CAIR). The sequence is that of N5-carboxyaminoimidazole ribonucleotide mutase from Vibrio vulnificus (strain CMCP6).